A 118-amino-acid polypeptide reads, in one-letter code: Small ribosomal subunit protein uS13 (118 aa).

Residues 94–118 (SLPLRGQRTKTNARTRKGPRKPIRK) form a disordered region.

The protein belongs to the universal ribosomal protein uS13 family. As to quaternary structure, part of the 30S ribosomal subunit. Forms a loose heterodimer with protein S19. Forms two bridges to the 50S subunit in the 70S ribosome.

In terms of biological role, located at the top of the head of the 30S subunit, it contacts several helices of the 16S rRNA. In the 70S ribosome it contacts the 23S rRNA (bridge B1a) and protein L5 of the 50S subunit (bridge B1b), connecting the 2 subunits; these bridges are implicated in subunit movement. Contacts the tRNAs in the A and P-sites. This Shewanella sp. (strain W3-18-1) protein is Small ribosomal subunit protein uS13.